A 530-amino-acid chain; its full sequence is 4-alpha-glucanotransferase (530 aa).

It belongs to the disproportionating enzyme family.

It is found in the cytoplasm. The enzyme catalyses Transfers a segment of a (1-&gt;4)-alpha-D-glucan to a new position in an acceptor, which may be glucose or a (1-&gt;4)-alpha-D-glucan.. This chain is 4-alpha-glucanotransferase (malQ), found in Chlamydia caviae (strain ATCC VR-813 / DSM 19441 / 03DC25 / GPIC) (Chlamydophila caviae).